The sequence spans 181 residues: Large ribosomal subunit protein uL6 (181 aa).

It belongs to the universal ribosomal protein uL6 family. Part of the 50S ribosomal subunit.

Functionally, this protein binds to the 23S rRNA, and is important in its secondary structure. It is located near the subunit interface in the base of the L7/L12 stalk, and near the tRNA binding site of the peptidyltransferase center. This is Large ribosomal subunit protein uL6 from Desulforudis audaxviator (strain MP104C).